Reading from the N-terminus, the 381-residue chain is Diguanylate cyclase DosC (381 aa).

Heme is bound at residue histidine 98. Residues 325–381 (TPLSVLIIDVDKFKEINDTWGHNTGDEILRKVSFLSQKRLVKSKILGAGSSRKLAVS) form the GGDEF domain. Aspartate 333 provides a ligand contact to Mg(2+). Substrate contacts are provided by asparagine 341 and aspartate 350.

The cofactor is heme. Mg(2+) serves as cofactor.

The enzyme catalyses 2 GTP = 3',3'-c-di-GMP + 2 diphosphate. The protein operates within purine metabolism; 3',5'-cyclic di-GMP biosynthesis. Functionally, globin-coupled heme-based oxygen sensor protein displaying diguanylate cyclase (DGC) activity in response to oxygen availability. Thus, catalyzes the synthesis of cyclic diguanylate (c-di-GMP) via the condensation of 2 GTP molecules. Cyclic-di-GMP is a second messenger which controls cell surface-associated traits in bacteria. The polypeptide is Diguanylate cyclase DosC (dosC) (Shigella flexneri).